The chain runs to 340 residues: Guanine nucleotide-binding protein subunit beta-1 (340 aa).

7 WD repeats span residues 53-83 (GHLA…IVWD), 95-125 (LRSS…SIYS), 141-170 (GHTG…ALWD), 182-212 (GHTG…KLWD), 224-254 (GHES…RLFD), 268-298 (NIIC…NVWD), and 310-340 (GHDN…KIWN).

This sequence belongs to the WD repeat G protein beta family. G proteins are composed of 3 units, alpha, beta and gamma. Interacts with G protein gamma subunits gpc-1 and gpc-2 and with egl-10 and eat-16. Interacts with goa-1 (in GDP-bound form).

Guanine nucleotide-binding proteins (G proteins) are involved as a modulator or transducer in various transmembrane signaling systems. The beta and gamma chains are required for the GTPase activity, for replacement of GDP by GTP, and for G protein-effector interaction. In the early embryo, controls the magnitude of the forces acting on centrosomes but is not required for generating asymmetric forces. This chain is Guanine nucleotide-binding protein subunit beta-1 (gpb-1), found in Caenorhabditis briggsae.